The following is a 201-amino-acid chain: FMN-dependent NADH:quinone oxidoreductase (201 aa).

FMN contacts are provided by residues Ser10, 16–18 (SQS), 96–99 (MYNF), and 140–143 (SRGG).

Belongs to the azoreductase type 1 family. As to quaternary structure, homodimer. FMN serves as cofactor.

The catalysed reaction is 2 a quinone + NADH + H(+) = 2 a 1,4-benzosemiquinone + NAD(+). It carries out the reaction N,N-dimethyl-1,4-phenylenediamine + anthranilate + 2 NAD(+) = 2-(4-dimethylaminophenyl)diazenylbenzoate + 2 NADH + 2 H(+). Its function is as follows. Quinone reductase that provides resistance to thiol-specific stress caused by electrophilic quinones. Functionally, also exhibits azoreductase activity. Catalyzes the reductive cleavage of the azo bond in aromatic azo compounds to the corresponding amines. This is FMN-dependent NADH:quinone oxidoreductase from Escherichia coli O6:K15:H31 (strain 536 / UPEC).